The primary structure comprises 293 residues: ATP synthase gamma chain (293 aa).

It belongs to the ATPase gamma chain family. In terms of assembly, F-type ATPases have 2 components, CF(1) - the catalytic core - and CF(0) - the membrane proton channel. CF(1) has five subunits: alpha(3), beta(3), gamma(1), delta(1), epsilon(1). CF(0) has three main subunits: a, b and c.

The protein localises to the cell inner membrane. Its function is as follows. Produces ATP from ADP in the presence of a proton gradient across the membrane. The gamma chain is believed to be important in regulating ATPase activity and the flow of protons through the CF(0) complex. The sequence is that of ATP synthase gamma chain from Gluconacetobacter diazotrophicus (strain ATCC 49037 / DSM 5601 / CCUG 37298 / CIP 103539 / LMG 7603 / PAl5).